The sequence spans 196 residues: FMN-dependent NADH:quinone oxidoreductase (196 aa).

FMN contacts are provided by residues Ser-10, 16-18 (SQS), 93-96 (MYNF), and 137-140 (TRGG).

This sequence belongs to the azoreductase type 1 family. Homodimer. FMN is required as a cofactor.

It catalyses the reaction 2 a quinone + NADH + H(+) = 2 a 1,4-benzosemiquinone + NAD(+). The catalysed reaction is N,N-dimethyl-1,4-phenylenediamine + anthranilate + 2 NAD(+) = 2-(4-dimethylaminophenyl)diazenylbenzoate + 2 NADH + 2 H(+). In terms of biological role, quinone reductase that provides resistance to thiol-specific stress caused by electrophilic quinones. Functionally, also exhibits azoreductase activity. Catalyzes the reductive cleavage of the azo bond in aromatic azo compounds to the corresponding amines. The polypeptide is FMN-dependent NADH:quinone oxidoreductase (Shewanella amazonensis (strain ATCC BAA-1098 / SB2B)).